The chain runs to 277 residues: Inositol monophosphatase 1 (277 aa).

Residues Glu70, Asp90, Ile92, and Asp93 each contribute to the Mg(2+) site. Residue Glu70 coordinates substrate. Substrate is bound by residues 92–95 (IDGT), 194–196 (GTA), Glu213, and Asp220. Position 220 (Asp220) interacts with Mg(2+).

Belongs to the inositol monophosphatase superfamily. In terms of assembly, homodimer. Requires Mg(2+) as cofactor. Ubiquitous.

It is found in the cytoplasm. The enzyme catalyses a myo-inositol phosphate + H2O = myo-inositol + phosphate. The catalysed reaction is 1D-myo-inositol 1-phosphate + H2O = myo-inositol + phosphate. It carries out the reaction 1D-myo-inositol 2-phosphate + H2O = myo-inositol + phosphate. It catalyses the reaction 1D-myo-inositol 3-phosphate + H2O = myo-inositol + phosphate. The enzyme catalyses 1D-myo-inositol 4-phosphate + H2O = myo-inositol + phosphate. The catalysed reaction is 1D-myo-inositol 5-phosphate + H2O = myo-inositol + phosphate. It carries out the reaction 1D-myo-inositol 6-phosphate + H2O = myo-inositol + phosphate. It catalyses the reaction scyllo-inositol 1-phosphate + H2O = scyllo-inositol + phosphate. The enzyme catalyses alpha-D-galactose 1-phosphate + H2O = D-galactose + phosphate. The catalysed reaction is alpha-D-glucose 1-phosphate + H2O = D-glucose + phosphate. It carries out the reaction D-glucose 6-phosphate + H2O = D-glucose + phosphate. It catalyses the reaction beta-D-fructose 1-phosphate + H2O = D-fructose + phosphate. The enzyme catalyses glycerol 2-phosphate + H2O = glycerol + phosphate. The catalysed reaction is adenosine 2'-phosphate + H2O = adenosine + phosphate. It functions in the pathway polyol metabolism; myo-inositol biosynthesis; myo-inositol from D-glucose 6-phosphate: step 2/2. Activity with myo-inositol monophosphate and D-galactose 1-phosphate is inhibited by Li(+), Ca(2+) and Mn(2+), but also by Mg(2+) at concentrations above 3 mM. Functionally, phosphatase involved in the dephosphorylation of myo-inositol monophosphate to generate myo-inositol. Is also able to dephosphorylate scyllo-inositol-phosphate, myo-inositol 1,4-diphosphate, scyllo-inositol-1,3-diphosphate and scyllo-inositol-1,4-diphosphate. Also dephosphorylates in vitro other sugar-phosphates including D-galactose-1-phosphate, glucose-1-phosphate, glucose-6-phosphate, fructose-1-phosphate, beta-glycerophosphate and 2'-AMP. Responsible for the provision of inositol required for synthesis of phosphatidylinositol and polyphosphoinositides, and involved in maintaining normal brain function. Has been implicated as the pharmacological target for lithium Li(+) action in brain. Is equally active with myo-inositol monophosphate and D-galactose 1-phosphate. The polypeptide is Inositol monophosphatase 1 (Impa1) (Rattus norvegicus (Rat)).